The primary structure comprises 520 residues: Ribonuclease Y (520 aa).

The chain crosses the membrane as a helical span at residues 4 to 24 (TMFTIISILLSLICLVVGYFV). The 64-residue stretch at 210-273 (TVSVVNLPND…ETARIALDKL (64 aa)) folds into the KH domain. In terms of domain architecture, HD spans 336-429 (VLKHSIEVAH…VAAADALSAA (94 aa)).

This sequence belongs to the RNase Y family.

It is found in the cell membrane. Endoribonuclease that initiates mRNA decay. In Bacillus pumilus (strain SAFR-032), this protein is Ribonuclease Y.